Here is a 372-residue protein sequence, read N- to C-terminus: GDP-mannose transporter GONST3 (372 aa).

A run of 10 helical transmembrane segments spans residues 33–53 (ASVY…SIIN), 60–80 (FPYP…GVLL), 92–112 (LNLL…LSLF), 125–145 (TFIV…TLFL), 155–175 (WGSL…DYQF), 177–197 (IAAY…FVYI), 209–229 (WGLV…ELLI), 251–271 (VVLP…FGFS), 280–300 (GFTV…LMVW), and 303–323 (HSTF…VMYQ). The interval 331-372 (NATQEAKPQEQDEEQEKLLEMQENKESNSVDIKETLKSEEKL) is disordered. Residues 346-372 (EKLLEMQENKESNSVDIKETLKSEEKL) are compositionally biased toward basic and acidic residues.

Belongs to the nucleotide-sugar transporter family. GDP-Mannose:GMP antiporter (GMA) (TC 2.A.7.13) subfamily. In terms of tissue distribution, expressed in rosette leaves, stems, flowers and siliques.

It is found in the golgi apparatus membrane. Its function is as follows. GDP-mannose transporter that may be involved in the import of GDP-mannose from the cytoplasm into the Golgi lumen. The protein is GDP-mannose transporter GONST3 of Arabidopsis thaliana (Mouse-ear cress).